The following is a 66-amino-acid chain: uncharacterized protein (66 aa).

This is an uncharacterized protein from Chlamydia pneumoniae (Chlamydophila pneumoniae).